Reading from the N-terminus, the 465-residue chain is Ribulose bisphosphate carboxylase large chain (465 aa).

N6,N6,N6-trimethyllysine is present on K4. Residues N113 and T163 each coordinate substrate. K165 (proton acceptor) is an active-site residue. K167 contributes to the substrate binding site. Mg(2+)-binding residues include K191, D193, and E194. K191 carries the post-translational modification N6-carboxylysine. H284 serves as the catalytic Proton acceptor. Residues R285, H317, and S369 each coordinate substrate.

It belongs to the RuBisCO large chain family. Type I subfamily. In terms of assembly, heterohexadecamer of 8 large chains and 8 small chains; disulfide-linked. The disulfide link is formed within the large subunit homodimers. Requires Mg(2+) as cofactor. Post-translationally, the disulfide bond which can form in the large chain dimeric partners within the hexadecamer appears to be associated with oxidative stress and protein turnover.

Its subcellular location is the plastid. The protein resides in the chloroplast. It catalyses the reaction 2 (2R)-3-phosphoglycerate + 2 H(+) = D-ribulose 1,5-bisphosphate + CO2 + H2O. The catalysed reaction is D-ribulose 1,5-bisphosphate + O2 = 2-phosphoglycolate + (2R)-3-phosphoglycerate + 2 H(+). In terms of biological role, ruBisCO catalyzes two reactions: the carboxylation of D-ribulose 1,5-bisphosphate, the primary event in carbon dioxide fixation, as well as the oxidative fragmentation of the pentose substrate in the photorespiration process. Both reactions occur simultaneously and in competition at the same active site. This Dillenia indica (Elephant apple) protein is Ribulose bisphosphate carboxylase large chain.